Here is a 162-residue protein sequence, read N- to C-terminus: Endoribonuclease YbeY (162 aa).

Zn(2+)-binding residues include His-118, His-122, and His-128.

The protein belongs to the endoribonuclease YbeY family. Zn(2+) is required as a cofactor.

It localises to the cytoplasm. In terms of biological role, single strand-specific metallo-endoribonuclease involved in late-stage 70S ribosome quality control and in maturation of the 3' terminus of the 16S rRNA. The protein is Endoribonuclease YbeY of Caulobacter sp. (strain K31).